Here is a 199-residue protein sequence, read N- to C-terminus: BREX protein BrxA (199 aa).

The protein belongs to the BrxA family.

In terms of biological role, BREX systems (bacteriophage exclusion) provide immunity against bacteriophage. Part of a type 1 BREX system which protects against dsDNA phage. This system allows phage adsorption but prevents phage DNA replication, without degradation of the phage DNA. Methylation of bacterial DNA by PglX guides self/non-self discrimination. In Paramagnetospirillum magneticum (strain ATCC 700264 / AMB-1) (Magnetospirillum magneticum), this protein is BREX protein BrxA.